The following is a 382-amino-acid chain: Galactokinase (382 aa).

34–37 (EHTD) contacts substrate. 124-130 (GAGLSSS) contributes to the ATP binding site. The Mg(2+) site is built by S130 and E162. Catalysis depends on D174, which acts as the Proton acceptor. Substrate is bound at residue Y223.

The protein belongs to the GHMP kinase family. GalK subfamily.

The protein resides in the cytoplasm. It carries out the reaction alpha-D-galactose + ATP = alpha-D-galactose 1-phosphate + ADP + H(+). It participates in carbohydrate metabolism; galactose metabolism. In terms of biological role, catalyzes the transfer of the gamma-phosphate of ATP to D-galactose to form alpha-D-galactose-1-phosphate (Gal-1-P). This chain is Galactokinase, found in Escherichia coli O9:H4 (strain HS).